Here is a 223-residue protein sequence, read N- to C-terminus: MAENCTLDSEQAVLLFKEYNLFITAFLLFLTILLQYGYATRSRTIYILKMIVLWCFWPLNIAVGVISCIYPPNTGGLVAAIILTVFACLSFVGYWIQSCRLFKRCRSWWSFNPESNAVGSILLTNGQQCNFAIESVPMVLAPIIKNGVLYCEGQWLAKCEPDHLPKDIFVCTPDRRNIYRMVQKYTGDQSGNKKRFATFVYAKQSVDTGELESVATGGSSLYT.

Topologically, residues 1–18 (MAENCTLDSEQAVLLFKE) are virion surface. Residues 19–39 (YNLFITAFLLFLTILLQYGYA) traverse the membrane as a helical segment. Residues 40-49 (TRSRTIYILK) are Intravirion-facing. Residues 50-70 (MIVLWCFWPLNIAVGVISCIY) traverse the membrane as a helical segment. Topologically, residues 71–75 (PPNTG) are virion surface. A helical transmembrane segment spans residues 76–96 (GLVAAIILTVFACLSFVGYWI). The Intravirion portion of the chain corresponds to 97–223 (QSCRLFKRCR…VATGGSSLYT (127 aa)).

It belongs to the gammacoronaviruses M protein family. As to quaternary structure, homomultimer. Interacts with envelope E protein in the budding compartment of the host cell, which is located between endoplasmic reticulum and the Golgi complex. Forms a complex with HE and S proteins. Interacts with nucleocapsid N protein. This interaction probably participates in RNA packaging into the virus.

Its subcellular location is the virion membrane. It is found in the host Golgi apparatus membrane. Its function is as follows. Component of the viral envelope that plays a central role in virus morphogenesis and assembly via its interactions with other viral proteins. The protein is Membrane protein of Gallus gallus (Chicken).